Here is a 282-residue protein sequence, read N- to C-terminus: Bis(5'-nucleosyl)-tetraphosphatase, symmetrical (282 aa).

The protein belongs to the Ap4A hydrolase family.

The catalysed reaction is P(1),P(4)-bis(5'-adenosyl) tetraphosphate + H2O = 2 ADP + 2 H(+). Hydrolyzes diadenosine 5',5'''-P1,P4-tetraphosphate to yield ADP. This Klebsiella pneumoniae subsp. pneumoniae (strain ATCC 700721 / MGH 78578) protein is Bis(5'-nucleosyl)-tetraphosphatase, symmetrical.